We begin with the raw amino-acid sequence, 321 residues long: RNLGKVIDTLTCGFADLMGYIPLVGAPLGGAARALAHGVRVLEDGVNYATGNLPGCSFSLFLLALLSCLTVPASAYQVRNSTGLYHVTNDCPNSSIVYEAADAILHAPGCVPCVREGNASRCWVAMTPTVATRDGRLPTTQLRRHIDLLVGSATLCSALYVGDLCGSIFLVGQLFTFSPRRHWTTQGCNCSIYPGHITGHRMAWDMMMNWSPTTALVVAQLLRIPQAILDMIAGAHWGVLAGIAYFSMVGNWAKVLVVLLLFAGVDAETTVTGGSAAHGALGIASLFNQGARQNIQLINTNGSWHINSTALNCNDSLNTGW.

Residues 1–52 (RNLGKVIDTLTCGFADLMGYIPLVGAPLGGAARALAHGVRVLEDGVNYATGN) lie on the Cytoplasmic side of the membrane. The interval 6–57 (VIDTLTCGFADLMGYIPLVGAPLGGAARALAHGVRVLEDGVNYATGNLPGCS) is interaction with APOA2. The segment at 48–51 (YATG) is important for lipid droplets localization. The helical transmembrane segment at 53–73 (LPGCSFSLFLLALLSCLTVPA) threads the bilayer. Residues 62-75 (LLALLSCLTVPASA) constitute a propeptide, ER anchor for the core protein, removed in mature form by host signal peptidase. The Lumenal portion of the chain corresponds to 74–242 (SAYQVRNSTG…AGAHWGVLAG (169 aa)). N-linked (GlcNAc...) asparagine; by host glycans are attached at residues Asn-80, Asn-93, and Asn-118. An important for fusion region spans residues 149-180 (LVGSATLCSALYVGDLCGSIFLVGQLFTFSPR). N-linked (GlcNAc...) asparagine; by host glycosylation is present at Asn-189. The chain crosses the membrane as a helical span at residues 243–263 (IAYFSMVGNWAKVLVVLLLFA). Residues 264 to 321 (GVDAETTVTGGSAAHGALGIASLFNQGARQNIQLINTNGSWHINSTALNCNDSLNTGW) are Lumenal-facing. The segment at 268–294 (ETTVTGGSAAHGALGIASLFNQGARQN) is HVR1. Asn-301, Asn-307, and Asn-314 each carry an N-linked (GlcNAc...) (high mannose) asparagine; by host glycan.

Belongs to the hepacivirus polyprotein family. Homooligomer. Interacts with E1 (via C-terminus). Interacts with the non-structural protein 5A. Interacts (via N-terminus) with host STAT1 (via SH2 domain); this interaction results in decreased STAT1 phosphorylation and ubiquitin-mediated proteasome-dependent STAT1 degradation, leading to decreased IFN-stimulated gene transcription. Interacts with host STAT3; this interaction constitutively activates STAT3. Interacts with host LTBR receptor. Interacts with host TNFRSF1A receptor and possibly induces apoptosis. Interacts with host HNRPK. Interacts with host YWHAE. Interacts with host UBE3A/E6AP. Interacts with host DDX3X. Interacts with host APOA2. Interacts with host RXRA protein. Interacts with host SP110 isoform 3/Sp110b; this interaction sequesters the transcriptional corepressor SP110 away from the nucleus. Interacts with host CREB3 nuclear transcription protein; this interaction triggers cell transformation. Interacts with host ACY3. Interacts with host C1QR1. Interacts with host RBM24; this interaction, which enhances the interaction of the mature core protein with 5'-UTR, may inhibit viral translation and favor replication. Interacts with host EIF2AK2/PKR; this interaction induces the autophosphorylation of EIF2AK2. Part of the viral assembly initiation complex composed of NS2, E1, E2, NS3, NS4A, NS5A and the mature core protein. In terms of assembly, forms a heterodimer with envelope glycoprotein E2. Interacts with mature core protein. Interacts with protease NS2. The heterodimer E1/E2 interacts with host CLDN1; this interaction plays a role in viral entry into host cell. Interacts with host SPSB2 (via C-terminus). Part of the viral assembly initiation complex composed of NS2, E1, E2, NS3, NS4A, NS5A and the mature core protein. As to quaternary structure, forms a heterodimer with envelope glycoprotein E1. Interacts with host CD81 and SCARB1 receptors; these interactions play a role in viral entry into host cell. Interacts with host EIF2AK2/PKR; this interaction inhibits EIF2AK2 and probably allows the virus to evade the innate immune response. Interacts with host CD209/DC-SIGN and CLEC4M/DC-SIGNR. Interact with host SPCS1; this interaction is essential for viral particle assembly. Interacts with protease NS2. The heterodimer E1/E2 interacts with host CLDN1; this interaction plays a role in viral entry into host cell. Part of the viral assembly initiation complex composed of NS2, E1, E2, NS3, NS4A, NS5A and the mature core protein. In terms of processing, specific enzymatic cleavages in vivo yield mature proteins. The structural proteins, core, E1, E2 and p7 are produced by proteolytic processing by host signal peptidases. The core protein precursor is synthesized as a 23 kDa, which is retained in the ER membrane through the hydrophobic signal peptide. Cleavage by the signal peptidase releases the 21 kDa mature core protein. The cleavage of the core protein precursor occurs between aminoacids 176 and 188 but the exact cleavage site is not known. Some degraded forms of the core protein appear as well during the course of infection. The other proteins (p7, NS2, NS3, NS4A, NS4B, NS5A and NS5B) are cleaved by the viral proteases. Autoprocessing between NS2 and NS3 is mediated by the NS2 cysteine protease catalytic domain and regulated by the NS3 N-terminal domain. Post-translationally, phosphorylated by host PKC and PKA. Ubiquitinated; mediated by UBE3A and leading to core protein subsequent proteasomal degradation. In terms of processing, highly N-glycosylated.

The protein resides in the host endoplasmic reticulum membrane. It is found in the host mitochondrion membrane. The protein localises to the virion. Its subcellular location is the host cytoplasm. It localises to the host nucleus. The protein resides in the host lipid droplet. It is found in the virion membrane. Functionally, packages viral RNA to form a viral nucleocapsid, and promotes virion budding. Participates in the viral particle production as a result of its interaction with the non-structural protein 5A. Binds RNA and may function as a RNA chaperone to induce the RNA structural rearrangements taking place during virus replication. Modulates viral translation initiation by interacting with viral IRES and 40S ribosomal subunit. Affects various cell signaling pathways, host immunity and lipid metabolism. Prevents the establishment of cellular antiviral state by blocking the interferon-alpha/beta (IFN-alpha/beta) and IFN-gamma signaling pathways and by blocking the formation of phosphorylated STAT1 and promoting ubiquitin-mediated proteasome-dependent degradation of STAT1. Activates STAT3 leading to cellular transformation. Regulates the activity of cellular genes, including c-myc and c-fos. May repress the promoter of p53, and sequester CREB3 and SP110 isoform 3/Sp110b in the cytoplasm. Represses cell cycle negative regulating factor CDKN1A, thereby interrupting an important check point of normal cell cycle regulation. Targets transcription factors involved in the regulation of inflammatory responses and in the immune response: suppresses TNF-induced NF-kappa-B activation, and activates AP-1. Binds to dendritic cells (DCs) via C1QR1, resulting in down-regulation of T-lymphocytes proliferation. Alters lipid metabolism by interacting with hepatocellular proteins involved in lipid accumulation and storage. Induces up-regulation of FAS promoter activity, and thereby contributes to the increased triglyceride accumulation in hepatocytes (steatosis). Its function is as follows. Forms a heterodimer with envelope glycoprotein E2, which mediates virus attachment to the host cell, virion internalization through clathrin-dependent endocytosis and fusion with host membrane. Fusion with the host cell is most likely mediated by both E1 and E2, through conformational rearrangements of the heterodimer required for fusion rather than a classical class II fusion mechanism. E1/E2 heterodimer binds host apolipoproteins such as APOB and ApoE thereby forming a lipo-viro-particle (LVP). APOE associated to the LVP allows the initial virus attachment to cell surface receptors such as the heparan sulfate proteoglycans (HSPGs), syndecan-1 (SDC1), syndecan-1 (SDC2), the low-density lipoprotein receptor (LDLR) and scavenger receptor class B type I (SCARB1). The cholesterol transfer activity of SCARB1 allows E2 exposure and binding of E2 to SCARB1 and the tetraspanin CD81. E1/E2 heterodimer binding on CD81 activates the epithelial growth factor receptor (EGFR) signaling pathway. Diffusion of the complex E1-E2-EGFR-SCARB1-CD81 to the cell lateral membrane allows further interaction with Claudin 1 (CLDN1) and occludin (OCLN) to finally trigger HCV entry. Forms a heterodimer with envelope glycoprotein E1, which mediates virus attachment to the host cell, virion internalization through clathrin-dependent endocytosis and fusion with host membrane. Fusion with the host cell is most likely mediated by both E1 and E2, through conformational rearrangements of the heterodimer required for fusion rather than a classical class II fusion mechanism. The interaction between envelope glycoprotein E2 and host apolipoprotein E/APOE allows the proper assembly, maturation and infectivity of the viral particles. This interaction is probably promoted via the up-regulation of cellular autophagy by the virus. E1/E2 heterodimer binds host apolipoproteins such as APOB and APOE thereby forming a lipo-viro-particle (LVP). APOE associated to the LVP allows the initial virus attachment to cell surface receptors such as the heparan sulfate proteoglycans (HSPGs), syndecan-1 (SDC1), syndecan-1 (SDC2), the low-density lipoprotein receptor (LDLR) and scavenger receptor class B type I (SCARB1). The cholesterol transfer activity of SCARB1 allows E2 exposure and binding of E2 to SCARB1 and the tetraspanin CD81. E1/E2 heterodimer binding on CD81 activates the epithelial growth factor receptor (EGFR) signaling pathway. Diffusion of the complex E1-E2-EGFR-SCARB1-CD81 to the cell lateral membrane allows further interaction with Claudin 1 (CLDN1) and occludin (OCLN) to finally trigger HCV entry. Inhibits host EIF2AK2/PKR activation, preventing the establishment of an antiviral state. Viral ligand for CD209/DC-SIGN and CLEC4M/DC-SIGNR, which are respectively found on dendritic cells (DCs), and on liver sinusoidal endothelial cells and macrophage-like cells of lymph node sinuses. These interactions allow the capture of circulating HCV particles by these cells and subsequent facilitated transmission to permissive cells such as hepatocytes and lymphocyte subpopulations. In Homo sapiens (Human), this protein is Genome polyprotein.